A 225-amino-acid chain; its full sequence is Cyanamide hydratase DDI2 (225 aa).

Residues 52–162 (VLNHSLRVFQ…LQIATTLDNV (111 aa)) form the HD domain.

The protein belongs to the cyanamide dehydrase family. Homohexamer. Zn(2+) is required as a cofactor.

It carries out the reaction urea = cyanamide + H2O. In terms of biological role, cyanamide hydratase involved in the detoxification and/or utilization of cyanamide, a toxic nitrile compound distributed widely in the environment. In Saccharomyces cerevisiae (strain ATCC 204508 / S288c) (Baker's yeast), this protein is Cyanamide hydratase DDI2.